Consider the following 124-residue polypeptide: Small ribosomal subunit protein uS13 (124 aa).

A compositionally biased stretch (basic residues) spans 103 to 117 (KCNARTRKGPRKTVA). Residues 103-124 (KCNARTRKGPRKTVANKKIETK) are disordered.

It belongs to the universal ribosomal protein uS13 family. In terms of assembly, part of the 30S ribosomal subunit. Forms a loose heterodimer with protein S19. Forms two bridges to the 50S subunit in the 70S ribosome.

Located at the top of the head of the 30S subunit, it contacts several helices of the 16S rRNA. In the 70S ribosome it contacts the 23S rRNA (bridge B1a) and protein L5 of the 50S subunit (bridge B1b), connecting the 2 subunits; these bridges are implicated in subunit movement. Contacts the tRNAs in the A and P-sites. This is Small ribosomal subunit protein uS13 from Malacoplasma penetrans (strain HF-2) (Mycoplasma penetrans).